A 740-amino-acid chain; its full sequence is Catalase-peroxidase (740 aa).

Residues 1–16 are compositionally biased toward basic and acidic residues; sequence MSENHDAIVTDAKTEE. The disordered stretch occupies residues 1–38; that stretch reads MSENHDAIVTDAKTEETDGCPVAHGRAPHPTQGGGNRQ. Positions 108–231 form a cross-link, tryptophyl-tyrosyl-methioninium (Trp-Tyr) (with M-257); it reads WHSAGTYRIS…LGAVQMGLIY (124 aa). Catalysis depends on histidine 109, which acts as the Proton acceptor. Residues 231-257 constitute a cross-link (tryptophyl-tyrosyl-methioninium (Tyr-Met) (with W-108)); sequence YVNPEGPNGNPDPIAAARDIRETFRRM. Heme b is bound at residue histidine 272.

It belongs to the peroxidase family. Peroxidase/catalase subfamily. As to quaternary structure, homodimer. It depends on heme b as a cofactor. Post-translationally, formation of the three residue Trp-Tyr-Met cross-link is important for the catalase, but not the peroxidase activity of the enzyme.

The catalysed reaction is H2O2 + AH2 = A + 2 H2O. It carries out the reaction 2 H2O2 = O2 + 2 H2O. Its function is as follows. Bifunctional enzyme with both catalase and broad-spectrum peroxidase activity. The sequence is that of Catalase-peroxidase from Streptomyces coelicolor (strain ATCC BAA-471 / A3(2) / M145).